A 427-amino-acid polypeptide reads, in one-letter code: Gamma-glutamyl phosphate reductase (427 aa).

This sequence belongs to the gamma-glutamyl phosphate reductase family.

It localises to the cytoplasm. It carries out the reaction L-glutamate 5-semialdehyde + phosphate + NADP(+) = L-glutamyl 5-phosphate + NADPH + H(+). It functions in the pathway amino-acid biosynthesis; L-proline biosynthesis; L-glutamate 5-semialdehyde from L-glutamate: step 2/2. Its function is as follows. Catalyzes the NADPH-dependent reduction of L-glutamate 5-phosphate into L-glutamate 5-semialdehyde and phosphate. The product spontaneously undergoes cyclization to form 1-pyrroline-5-carboxylate. The polypeptide is Gamma-glutamyl phosphate reductase (Brucella ovis (strain ATCC 25840 / 63/290 / NCTC 10512)).